A 164-amino-acid chain; its full sequence is Phosphopantetheine adenylyltransferase (164 aa).

A substrate-binding site is contributed by serine 9. ATP contacts are provided by residues 9–10 (SF) and histidine 17. Lysine 41, leucine 73, and lysine 87 together coordinate substrate. ATP is bound by residues 88–90 (GLR), glutamate 98, and 123–129 (HSFLSSS).

It belongs to the bacterial CoaD family. As to quaternary structure, homohexamer. It depends on Mg(2+) as a cofactor.

The protein localises to the cytoplasm. It carries out the reaction (R)-4'-phosphopantetheine + ATP + H(+) = 3'-dephospho-CoA + diphosphate. The protein operates within cofactor biosynthesis; coenzyme A biosynthesis; CoA from (R)-pantothenate: step 4/5. Reversibly transfers an adenylyl group from ATP to 4'-phosphopantetheine, yielding dephospho-CoA (dPCoA) and pyrophosphate. This Rubrobacter xylanophilus (strain DSM 9941 / JCM 11954 / NBRC 16129 / PRD-1) protein is Phosphopantetheine adenylyltransferase.